Consider the following 412-residue polypeptide: 2-methylacyl-CoA dehydrogenase, mitochondrial (412 aa).

The N-terminal 25 residues, 1–25 (MHKLFAVRSLSSAIVKSFKSLQNQQ), are a transit peptide targeting the mitochondrion. FAD is bound by residues 154-163 (LAMSEPNAGS) and 187-189 (WCT). Serine 163 serves as a coordination point for substrate. Substrate is bound by residues 209–210 (SK), tyrosine 264, and 271–274 (DLER). Glutamate 273 serves as the catalytic Proton acceptor. FAD contacts are provided by residues arginine 299, glutamine 310, and 367-371 (QCLGG). 394 to 395 (AG) serves as a coordination point for substrate. FAD is bound at residue 396-398 (TSE).

It belongs to the acyl-CoA dehydrogenase family. In terms of assembly, homotetramer. The cofactor is FAD. In terms of tissue distribution, expressed in flowers.

It is found in the mitochondrion. It carries out the reaction 2-methylbutanoyl-CoA + oxidized [electron-transfer flavoprotein] + H(+) = (2E)-2-methylbut-2-enoyl-CoA + reduced [electron-transfer flavoprotein]. In terms of biological role, short/branched-chain acyl-CoA dehydrogenase (SBCAD). Uses 2-methylbutanoyl-CoA as substrate. Minor activity with the straight-chain substrates, butanoyl-CoA, valeryl-CoA, hexanoyl-CoA, and octanoyl-CoA but no activity with isovaleryl-CoA. In Solanum tuberosum (Potato), this protein is 2-methylacyl-CoA dehydrogenase, mitochondrial (2MBCD).